A 654-amino-acid polypeptide reads, in one-letter code: Bifunctional 3'-phosphoadenosine 5'-phosphosulfate synthase pps-1 (654 aa).

The segment at 1 to 26 (MLTPRDENNEGDAMPMLKKPRYSSLS) is disordered. Residues 1-231 (MLTPRDENNE…VLDHLESKGL (231 aa)) are adenylyl-sulfate kinase. 66–71 (GAGKTT) is a binding site for ATP. Residues 93-96 (DNIR), Phe105, 110-113 (RQEN), 136-137 (IS), Lys175, and 190-191 (GF) contribute to the adenosine 5'-phosphosulfate site. ATP contacts are provided by residues Cys218, 449 to 452 (QLRN), 550 to 554 (GRDPA), and Ala592. The tract at residues 242–653 (VRELFVSDDL…AGYYKSLQNS (412 aa)) is sulfate adenylyltransferase.

This sequence in the N-terminal section; belongs to the APS kinase family. It in the C-terminal section; belongs to the sulfate adenylyltransferase family.

It localises to the nucleus. The catalysed reaction is sulfate + ATP + H(+) = adenosine 5'-phosphosulfate + diphosphate. It carries out the reaction adenosine 5'-phosphosulfate + ATP = 3'-phosphoadenylyl sulfate + ADP + H(+). It functions in the pathway sulfur metabolism; sulfate assimilation. Functionally, bifunctional enzyme with both ATP sulfurylase and APS kinase activity, which mediates two steps in the sulfate activation pathway. The first step is the transfer of a sulfate group to ATP to yield adenosine 5'-phosphosulfate (APS), and the second step is the transfer of a phosphate group from ATP to APS yielding 3'-phosphoadenylylsulfate (PAPS: activated sulfate donor used by sulfotransferase). Required for normal growth and development. Involved in several aspects of both embryonic and postembryonic development, including molting, changes in cell shape, and patterning of epithelial and muscle cells. The chain is Bifunctional 3'-phosphoadenosine 5'-phosphosulfate synthase pps-1 from Caenorhabditis elegans.